Here is an 817-residue protein sequence, read N- to C-terminus: Cargo-transport protein YPP1 (817 aa).

This sequence belongs to the YPP1 family. Interacts with ribosomes.

The protein resides in the cytoplasmic granule. It localises to the cell membrane. Its function is as follows. Involved in endocytosis. This Saccharomyces cerevisiae (strain ATCC 204508 / S288c) (Baker's yeast) protein is Cargo-transport protein YPP1 (YPP1).